We begin with the raw amino-acid sequence, 150 residues long: 3-dehydroquinate dehydratase (150 aa).

Tyrosine 23 functions as the Proton acceptor in the catalytic mechanism. 3 residues coordinate substrate: asparagine 79, histidine 85, and aspartate 92. Histidine 105 functions as the Proton donor in the catalytic mechanism. Residues 106–107 and arginine 116 contribute to the substrate site; that span reads IS.

Belongs to the type-II 3-dehydroquinase family. In terms of assembly, homododecamer.

The catalysed reaction is 3-dehydroquinate = 3-dehydroshikimate + H2O. It participates in metabolic intermediate biosynthesis; chorismate biosynthesis; chorismate from D-erythrose 4-phosphate and phosphoenolpyruvate: step 3/7. Its function is as follows. Catalyzes a trans-dehydration via an enolate intermediate. In Marinomonas sp. (strain MWYL1), this protein is 3-dehydroquinate dehydratase.